Reading from the N-terminus, the 91-residue chain is Putative septation protein SpoVG (91 aa).

The protein belongs to the SpoVG family.

Could be involved in septation. This chain is Putative septation protein SpoVG, found in Clostridium beijerinckii (strain ATCC 51743 / NCIMB 8052) (Clostridium acetobutylicum).